Reading from the N-terminus, the 478-residue chain is Zinc metalloproteinase/disintegrin (478 aa).

The first 20 residues, Met-1–Ser-20, serve as a signal peptide directing secretion. The propeptide occupies Lys-21 to Glu-194. Gln-195 bears the Pyrrolidone carboxylic acid mark. The region spanning Arg-201–Pro-397 is the Peptidase M12B domain. Positions 204 and 288 each coordinate Ca(2+). Cystine bridges form between Cys-312–Cys-392, Cys-352–Cys-376, and Cys-354–Cys-359. A Zn(2+)-binding site is contributed by His-337. The active site involves Glu-338. Zn(2+)-binding residues include His-341 and His-347. Ca(2+) contacts are provided by Cys-392 and Asn-395. Residues Leu-398–Leu-413 constitute a propeptide that is removed on maturation. Positions Thr-405 to Asp-478 constitute a Disintegrin domain. Cystine bridges form between Cys-420–Cys-443, Cys-434–Cys-440, Cys-439–Cys-464, and Cys-452–Cys-471. Residues Val-456–Asp-458 carry the Cell attachment site; atypical (VGD) motif.

The protein belongs to the venom metalloproteinase (M12B) family. P-II subfamily. P-IIe sub-subfamily. Monomer (metalloproteinase). Heterodimer; disulfide-linked (disintegrin). It depends on Zn(2+) as a cofactor. Expressed by the venom gland.

It localises to the secreted. Its activity is regulated as follows. Fibrinolytic and caseinolytic activities are inhibited by Cd(2+), Cu(2+) and Co(2+) ions. Not inhibited by Mg(2+), Ca(2+) and Ba(2+). Also inhibited by EDTA, EGTA and 1,10-phenanthroline. Its function is as follows. Fibrinolytic and fibrinogenolytic metalloproteinase that hydrolyzes the Aalpha-chain and more slowly the Bbeta-chain of fibrin and fibrinogen. Its fibrinolytic activity is direct, without any plasminogen activation. Also hydrolyzes casein and B-chain of oxidized insulin. Inhibits ADP-induced and collagen-induced platelet aggregation. Shows low hemorrhagic activity. Cleaves the plasma proteinase inhibitors alpha(2)-macroglobulin (A2M) and pregnancy zone protein (PZP), and is inhibited by them. The metalloprotease has no strict P1-P1' specificity requirement. Hydrolysis at sites with a Pro residue at P1 is observed with bradykinin, substance P, PZP and alpha chain fibrinogen (FGA). In terms of biological role, poor inhibitor of platelet aggregation. The disintegrin inhibits the adhesion of the alpha-4/beta-1 (ITGA4/ITGB1) integrin to VCAM-1. Inhibition on alpha-2b/beta-3 (ITGA2B/ITGB3) is low. This is Zinc metalloproteinase/disintegrin from Macrovipera lebetinus (Levantine viper).